The chain runs to 343 residues: Heme A synthase (343 aa).

Transmembrane regions (helical) follow at residues 13–33, 96–116, 130–150, 165–185, 197–217, 258–278, 290–310, and 311–331; these read VALW…VGGA, HRLL…FFLI, VLLG…SSGL, LGLA…AWAG, GWAL…ALVA, LHHR…GVAA, LTAF…IWTL, and MTAV…ILLA. Residue histidine 260 coordinates heme. Position 322 (histidine 322) interacts with heme.

This sequence belongs to the COX15/CtaA family. Type 2 subfamily. Interacts with CtaB. Heme b serves as cofactor.

The protein localises to the cell membrane. It carries out the reaction Fe(II)-heme o + 2 A + H2O = Fe(II)-heme a + 2 AH2. The protein operates within porphyrin-containing compound metabolism; heme A biosynthesis; heme A from heme O: step 1/1. Its function is as follows. Catalyzes the conversion of heme O to heme A by two successive hydroxylations of the methyl group at C8. The first hydroxylation forms heme I, the second hydroxylation results in an unstable dihydroxymethyl group, which spontaneously dehydrates, resulting in the formyl group of heme A. The protein is Heme A synthase of Caulobacter sp. (strain K31).